The chain runs to 261 residues: MQYEWRKAELIGQLLNLGVTPGGVLLVHSSFRSVRPLEDGPLGLIEALRAALGPGGTLVMPSWSGLDDEPFDPATSPVTPDLGVVSDTFWRLPNVKRSAHPFAFAAAGPQAEQIISDPLPLPPHSPASPVARVHELDGQVLLLGVGHDANTTLHLAELMAKVPYGVPRHCTILQDGKLVRVDYLENDHCCERFALADRWLKEKSLQKEGPVGHAFARLIRSRDIVATALGQLGRDPLIFLHPPEGGMRRMRCRSPVDWLSS.

Belongs to the antibiotic N-acetyltransferase family.

It catalyses the reaction a 2-deoxystreptamine antibiotic + acetyl-CoA = an N(3)-acetyl-2-deoxystreptamine antibiotic + CoA + H(+). Resistance to antibiotics containing the 2-deoxy-streptamine ring including gentamicin, kanamycin, tobramycin, neomycin and apramycin. The protein is Aminoglycoside N(3)-acetyltransferase IV (aacC4) of Salmonella sp.